Here is a 276-residue protein sequence, read N- to C-terminus: Large ribosomal subunit protein uL2 (276 aa).

2 disordered regions span residues 1–20 and 219–276; these read MGIKKYNPTTNGRRNMTTND and TVRG…RRKK. Positions 7 to 20 are enriched in polar residues; it reads NPTTNGRRNMTTND.

This sequence belongs to the universal ribosomal protein uL2 family. In terms of assembly, part of the 50S ribosomal subunit. Forms a bridge to the 30S subunit in the 70S ribosome.

Functionally, one of the primary rRNA binding proteins. Required for association of the 30S and 50S subunits to form the 70S ribosome, for tRNA binding and peptide bond formation. It has been suggested to have peptidyltransferase activity; this is somewhat controversial. Makes several contacts with the 16S rRNA in the 70S ribosome. This chain is Large ribosomal subunit protein uL2, found in Bacillus cereus (strain G9842).